Consider the following 381-residue polypeptide: MIDTLRPVPFASEMAICKTVSWLNEQLELGNERLLLMDCRPQELYESSHIESAINVAIPGIMLRRLQKGNLPVRALFTRCEDRDRFTRRCGTDTVVLYDENSSDWNENTGGESVLGLLLKKLKDEGCRAFYLEGGFSKFQAEFALHCETNLDGSCSSSSPPLPVLGLGGLRISSDSSSDIESDLDRDPNSATDSDGSPLSNSQPSFPVEILPFLYLGCAKDSTNLDVLEEFGIKYILNVTPNLPNLFENAGEFKYKQIPISDHWSQNLSQFFPEAISFIDEARGKNCGVLVHCLAGISRSVTVTVAYLMQKLNLSMNDAYDIVKMKKSNISPNFNFMGQLLDFERTLGLSSPCDNRVPTPQLYFTTPSNQNVYQVDSLQST.

The 119-residue stretch at 30 to 148 (GNERLLLMDC…FQAEFALHCE (119 aa)) folds into the Rhodanese domain. Positions 176–203 (SSSDIESDLDRDPNSATDSDGSPLSNSQ) are disordered. Residues 189–203 (NSATDSDGSPLSNSQ) are compositionally biased toward polar residues. A Tyrosine-protein phosphatase domain is found at 206–349 (FPVEILPFLY…LLDFERTLGL (144 aa)). Catalysis depends on Cys-293, which acts as the Phosphocysteine intermediate.

This sequence belongs to the protein-tyrosine phosphatase family. Non-receptor class dual specificity subfamily. In terms of assembly, interacts with MAPK1/ERK2. Post-translationally, ubiquitinated by the SCF(FBXO31) complex, leading to its proteasomal degradation.

It is found in the cytoplasm. The enzyme catalyses O-phospho-L-tyrosyl-[protein] + H2O = L-tyrosyl-[protein] + phosphate. It catalyses the reaction O-phospho-L-seryl-[protein] + H2O = L-seryl-[protein] + phosphate. The catalysed reaction is O-phospho-L-threonyl-[protein] + H2O = L-threonyl-[protein] + phosphate. Its function is as follows. Dual specificity protein phosphatase, which mediates dephosphorylation and inactivation of MAP kinases. Has a specificity for the ERK family. Plays an important role in alleviating acute postoperative pain. Necessary for the normal dephosphorylation of the long-lasting phosphorylated forms of spinal MAPK1/3 and MAP kinase p38 induced by peripheral surgery, which drives the resolution of acute postoperative allodynia. Also important for dephosphorylation of MAPK1/3 in local wound tissue, which further contributes to resolution of acute pain. This Mus musculus (Mouse) protein is Dual specificity protein phosphatase 6 (Dusp6).